The chain runs to 162 residues: Cyclic pyranopterin monophosphate synthase (162 aa).

Substrate-binding positions include 79–81 (LCH) and 117–118 (ME). Residue Asp-132 is part of the active site.

It belongs to the MoaC family. As to quaternary structure, homohexamer; trimer of dimers.

It carries out the reaction (8S)-3',8-cyclo-7,8-dihydroguanosine 5'-triphosphate = cyclic pyranopterin phosphate + diphosphate. Its pathway is cofactor biosynthesis; molybdopterin biosynthesis. Catalyzes the conversion of (8S)-3',8-cyclo-7,8-dihydroguanosine 5'-triphosphate to cyclic pyranopterin monophosphate (cPMP). This is Cyclic pyranopterin monophosphate synthase from Bordetella avium (strain 197N).